Reading from the N-terminus, the 54-residue chain is Potassium channel toxin alpha-KTx 14.1 (54 aa).

Positions 1 to 23 (MKIFFAILLILAVCSMAIWTVNG) are cleaved as a signal peptide.

The protein belongs to the short scorpion toxin superfamily. Potassium channel inhibitor family. Alpha-KTx 14 subfamily. Post-translationally, probably has three disulfide bridges. Expressed by the venom gland.

It localises to the secreted. Potential blocker of potassium channels. This is Potassium channel toxin alpha-KTx 14.1 from Olivierus martensii (Manchurian scorpion).